The primary structure comprises 274 residues: Shikimate dehydrogenase (NADP(+)) (274 aa).

Residues S15 to S17 and T62 each bind shikimate. The active-site Proton acceptor is the K66. NADP(+) is bound at residue D78. Shikimate contacts are provided by N87 and D102. NADP(+) is bound by residues G127–A131 and M215. A shikimate-binding site is contributed by Y217. Residue G239 participates in NADP(+) binding.

The protein belongs to the shikimate dehydrogenase family. Homodimer.

It carries out the reaction shikimate + NADP(+) = 3-dehydroshikimate + NADPH + H(+). Its pathway is metabolic intermediate biosynthesis; chorismate biosynthesis; chorismate from D-erythrose 4-phosphate and phosphoenolpyruvate: step 4/7. Involved in the biosynthesis of the chorismate, which leads to the biosynthesis of aromatic amino acids. Catalyzes the reversible NADPH linked reduction of 3-dehydroshikimate (DHSA) to yield shikimate (SA). The polypeptide is Shikimate dehydrogenase (NADP(+)) (Dechloromonas aromatica (strain RCB)).